We begin with the raw amino-acid sequence, 130 residues long: ESAT-6 secretion system extracellular protein C (130 aa).

Belongs to the EsxC family.

It is found in the secreted. This is ESAT-6 secretion system extracellular protein C from Staphylococcus aureus (strain MSSA476).